Here is a 453-residue protein sequence, read N- to C-terminus: Pup--protein ligase (453 aa).

Position 9 (E9) interacts with Mg(2+). Residue R53 coordinates ATP. Y55 is a Mg(2+) binding site. The active-site Proton acceptor is the D57. E63 provides a ligand contact to Mg(2+). ATP-binding residues include T66 and W420.

It belongs to the Pup ligase/Pup deamidase family. Pup-conjugating enzyme subfamily.

The enzyme catalyses ATP + [prokaryotic ubiquitin-like protein]-L-glutamate + [protein]-L-lysine = ADP + phosphate + N(6)-([prokaryotic ubiquitin-like protein]-gamma-L-glutamyl)-[protein]-L-lysine.. It participates in protein degradation; proteasomal Pup-dependent pathway. It functions in the pathway protein modification; protein pupylation. In terms of biological role, catalyzes the covalent attachment of the prokaryotic ubiquitin-like protein modifier Pup to the proteasomal substrate proteins, thereby targeting them for proteasomal degradation. This tagging system is termed pupylation. The ligation reaction involves the side-chain carboxylate of the C-terminal glutamate of Pup and the side-chain amino group of a substrate lysine. The chain is Pup--protein ligase from Kineococcus radiotolerans (strain ATCC BAA-149 / DSM 14245 / SRS30216).